A 736-amino-acid chain; its full sequence is DEAD-box ATP-dependent RNA helicase 21 (736 aa).

Residues 14 to 38 are a coiled coil; it reads LTREEREKLALERRQAAVTDQRRSA. The segment covering 25-38 has biased composition (basic and acidic residues); that stretch reads ERRQAAVTDQRRSA. Disordered stretches follow at residues 25-178 and 231-263; these read ERRQ…PKKR and KVAA…DKKE. Residues 46–58 show a composition bias toward pro residues; it reads PRPPPPPPPPLSN. Composition is skewed to basic and acidic residues over residues 64-166 and 231-252; these read SSSH…DAIK and KVAA…GLDD. Residues 137-167 are a coiled coil; the sequence is DRDRERGDREKDRLEKMAEREREKELDAIKE. A Q motif motif is present at residues 315–343; the sequence is RKWSESKLGTELLRAVEKAGYKEPSPIQM. The region spanning 346 to 541 is the Helicase ATP-binding domain; the sequence is IPLGLQQRDV…RKYLRNPVVV (196 aa). An ATP-binding site is contributed by 359 to 366; sequence AETGSGKT. Positions 472–475 match the DEAD box motif; the sequence is DEAD. In terms of domain architecture, Helicase C-terminal spans 568–712; the sequence is RLQKILTDLG…PVPPELARHE (145 aa). A disordered region spans residues 704–736; sequence VPPELARHEASKFKPGSVPDRPPRRNDTVYATH.

The protein belongs to the DEAD box helicase family. DDX23/PRP28 subfamily.

Its subcellular location is the cytoplasm. The protein resides in the nucleus. The enzyme catalyses ATP + H2O = ADP + phosphate + H(+). Its function is as follows. ATP-dependent RNA helicase involved in mRNA splicing. May destabilize the U1/5'-splice site duplex to permit an effective competition for the 5'-splice site by the U6 snRNA, resulting in the switch between U1 and U6 at the 5'-splice site. May also act to unwind the U4/U6 base-pairing interaction in the U4/U6/U5 snRNP, facilitating the first covalent step of splicing. This Oryza sativa subsp. japonica (Rice) protein is DEAD-box ATP-dependent RNA helicase 21.